A 330-amino-acid chain; its full sequence is MSTPPAKRQKRDQYRKRAAAAANEDTGKVKLPQKKFYRQRAHANPFSDHQLDYPLSPAHMDWSSHYPAFVNPDPEQKNLAGARKLLKDVEVVDIGCGFGGLLVGLAPLLPETLMLGMEIRTQVIEYVENRIQALRTQQNQLKNSSTTASESPAPAIPAEPATDGASPDAASTPETSNSPVPGGYQNISALRSNTMKFFPNFFGKQQLSKIFICFPDPHFKAKKHKARIISENLNAEYAYALKPGGLLYTITDVEEYHHWVLRHFREEGEHEASEGGVKDLFERVSEEELASDPCVEVMRESTEEGKKVTRNKGNKYVAVFRRKADPEWPA.

The segment at methionine 1–glycine 27 is disordered. A compositionally biased stretch (basic residues) spans lysine 7 to alanine 18. S-adenosyl-L-methionine-binding positions include glycine 95 and glutamate 118–isoleucine 119. The interval glutamine 138–glutamine 185 is disordered. Low complexity predominate over residues serine 144 to threonine 162. Residues threonine 172–glutamine 185 are compositionally biased toward polar residues. Residues asparagine 193–threonine 194 and cysteine 213 each bind S-adenosyl-L-methionine. Aspartate 216 is a catalytic residue. Threonine 302–glutamate 304 serves as a coordination point for S-adenosyl-L-methionine.

It belongs to the class I-like SAM-binding methyltransferase superfamily. TrmB family. Forms a complex with trm82.

The protein resides in the nucleus. It carries out the reaction guanosine(46) in tRNA + S-adenosyl-L-methionine = N(7)-methylguanosine(46) in tRNA + S-adenosyl-L-homocysteine. Its pathway is tRNA modification; N(7)-methylguanine-tRNA biosynthesis. Functionally, catalyzes the formation of N(7)-methylguanine at position 46 (m7G46) in tRNA. The sequence is that of tRNA (guanine-N(7)-)-methyltransferase (trm8) from Aspergillus oryzae (strain ATCC 42149 / RIB 40) (Yellow koji mold).